Here is a 447-residue protein sequence, read N- to C-terminus: GTPase Der (447 aa).

2 EngA-type G domains span residues 4 to 165 (QIIT…PEEE) and 180 to 357 (LQIV…KIWN). GTP contacts are provided by residues 10–17 (GRPNVGKS), 57–61 (DTPGL), 119–122 (NKCE), 186–193 (GRPNAGKS), 233–237 (DTAGL), and 298–301 (NKWD). Residues 358–443 (KKITTSKLNE…PIRFIYVKTK (86 aa)) form the KH-like domain.

Belongs to the TRAFAC class TrmE-Era-EngA-EngB-Septin-like GTPase superfamily. EngA (Der) GTPase family. In terms of assembly, associates with the 50S ribosomal subunit.

GTPase that plays an essential role in the late steps of ribosome biogenesis. The chain is GTPase Der from Rickettsia africae (strain ESF-5).